The following is a 148-amino-acid chain: Large ribosomal subunit protein uL15 (148 aa).

The span at 1-12 (MSEPIKLHDLRP) shows a compositional bias: basic and acidic residues. The segment at 1-52 (MSEPIKLHDLRPAKGANKPKTRVGRGEASKGKTAGRGTKGTKARKQVSAAFE) is disordered.

It belongs to the universal ribosomal protein uL15 family. Part of the 50S ribosomal subunit.

In terms of biological role, binds to the 23S rRNA. The sequence is that of Large ribosomal subunit protein uL15 from Corynebacterium diphtheriae (strain ATCC 700971 / NCTC 13129 / Biotype gravis).